We begin with the raw amino-acid sequence, 674 residues long: Xaa-Pro aminopeptidase 2 (674 aa).

Residues 1 to 21 form the signal peptide; the sequence is MARAHWGCCPWLVLLCACAWG. Residues N35, N49, and N65 are each glycosylated (N-linked (GlcNAc...) asparagine). R116 provides a ligand contact to substrate. 2 N-linked (GlcNAc...) asparagine glycosylation sites follow: N278 and N291. H430 serves as a coordination point for substrate. Zn(2+)-binding residues include D450, D461, and H524. 3 residues coordinate substrate: H524, H533, and E555. Zn(2+) contacts are provided by E555 and E569. Residue A649 is the site of GPI-anchor amidated alanine attachment. Residues 650 to 674 constitute a propeptide, removed in mature form; that stretch reads ARAPDTASWASVLVVSTLAILGWSV.

This sequence belongs to the peptidase M24B family. In terms of assembly, homotrimer. Requires Zn(2+) as cofactor. Post-translationally, N-glycosylated. As to expression, expressed in kidney, lung, heart, placenta, liver, small intestine and colon. No expression in brain, skeletal muscle, pancreas, spleen, thymus, prostate, testis and ovary.

The protein resides in the cell membrane. The catalysed reaction is Release of any N-terminal amino acid, including proline, that is linked to proline, even from a dipeptide or tripeptide.. With respect to regulation, inhibited by apstatin and the chelating agent 1,10-phenanthroline. Also inhibited by high concentrations of Zn(2+). Not significantly inhibited by bestatin or phosphoramidon. Functionally, membrane-bound metalloprotease which catalyzes the removal of a penultimate prolyl residue from the N-termini of peptides, such as Arg-Pro-Pro. May play a role in the metabolism of the vasodilator bradykinin. In Homo sapiens (Human), this protein is Xaa-Pro aminopeptidase 2 (XPNPEP2).